An 86-amino-acid chain; its full sequence is Translation machinery-associated protein 10 (86 aa).

Phosphoserine is present on residues Ser28 and Ser79. A disordered region spans residues 63–86 (NKTRRGSNSQNNERRLSDLQQYHI).

This sequence belongs to the STF2 family. Associates with ribosomes.

It is found in the cytoplasm. The protein resides in the nucleus. May be involved in inhibition of the reverse ATPase reaction of mitochondrial F(1)F(0)-type ATP synthase. This chain is Translation machinery-associated protein 10, found in Saccharomyces cerevisiae (strain ATCC 204508 / S288c) (Baker's yeast).